The sequence spans 435 residues: Histidine--tRNA ligase (435 aa).

Belongs to the class-II aminoacyl-tRNA synthetase family.

The protein localises to the cytoplasm. It catalyses the reaction tRNA(His) + L-histidine + ATP = L-histidyl-tRNA(His) + AMP + diphosphate + H(+). The chain is Histidine--tRNA ligase (hisS) from Aeropyrum pernix (strain ATCC 700893 / DSM 11879 / JCM 9820 / NBRC 100138 / K1).